The sequence spans 398 residues: 1-deoxy-D-xylulose 5-phosphate reductoisomerase (398 aa).

NADPH contacts are provided by Thr-11, Gly-12, Ser-13, Ile-14, and Asn-125. Lys-126 contacts 1-deoxy-D-xylulose 5-phosphate. Glu-127 contributes to the NADPH binding site. Asp-151 is a Mn(2+) binding site. 1-deoxy-D-xylulose 5-phosphate is bound by residues Ser-152, Glu-153, Ser-186, and His-209. Glu-153 serves as a coordination point for Mn(2+). Gly-215 contributes to the NADPH binding site. Residues Ser-222, Asn-227, Lys-228, and Glu-231 each coordinate 1-deoxy-D-xylulose 5-phosphate. A Mn(2+)-binding site is contributed by Glu-231.

Belongs to the DXR family. It depends on Mg(2+) as a cofactor. Mn(2+) serves as cofactor.

The enzyme catalyses 2-C-methyl-D-erythritol 4-phosphate + NADP(+) = 1-deoxy-D-xylulose 5-phosphate + NADPH + H(+). It functions in the pathway isoprenoid biosynthesis; isopentenyl diphosphate biosynthesis via DXP pathway; isopentenyl diphosphate from 1-deoxy-D-xylulose 5-phosphate: step 1/6. Its function is as follows. Catalyzes the NADPH-dependent rearrangement and reduction of 1-deoxy-D-xylulose-5-phosphate (DXP) to 2-C-methyl-D-erythritol 4-phosphate (MEP). In Acinetobacter baylyi (strain ATCC 33305 / BD413 / ADP1), this protein is 1-deoxy-D-xylulose 5-phosphate reductoisomerase.